The sequence spans 536 residues: CTP synthase (536 aa).

The segment at 1–267 (MSKFVFVTGG…CKETLRCLDL (267 aa)) is amidoligase domain. Residue Ser-13 coordinates CTP. Ser-13 provides a ligand contact to UTP. Residues 14 to 19 (SIGKGI) and Asp-71 contribute to the ATP site. Mg(2+) is bound by residues Asp-71 and Glu-141. CTP contacts are provided by residues 148–150 (DIE), 188–193 (KTKPTQ), and Lys-224. UTP-binding positions include 188–193 (KTKPTQ) and Lys-224. In terms of domain architecture, Glutamine amidotransferase type-1 spans 292 to 534 (KVALVGKYIE…IKASREKLEQ (243 aa)). Gly-354 serves as a coordination point for L-glutamine. Cys-381 serves as the catalytic Nucleophile; for glutamine hydrolysis. Residues 382-385 (LGMQ), Glu-405, and Arg-462 contribute to the L-glutamine site. Catalysis depends on residues His-507 and Glu-509.

Belongs to the CTP synthase family. In terms of assembly, homotetramer.

The catalysed reaction is UTP + L-glutamine + ATP + H2O = CTP + L-glutamate + ADP + phosphate + 2 H(+). The enzyme catalyses L-glutamine + H2O = L-glutamate + NH4(+). It catalyses the reaction UTP + NH4(+) + ATP = CTP + ADP + phosphate + 2 H(+). The protein operates within pyrimidine metabolism; CTP biosynthesis via de novo pathway; CTP from UDP: step 2/2. Its activity is regulated as follows. Allosterically activated by GTP, when glutamine is the substrate; GTP has no effect on the reaction when ammonia is the substrate. The allosteric effector GTP functions by stabilizing the protein conformation that binds the tetrahedral intermediate(s) formed during glutamine hydrolysis. Inhibited by the product CTP, via allosteric rather than competitive inhibition. In terms of biological role, catalyzes the ATP-dependent amination of UTP to CTP with either L-glutamine or ammonia as the source of nitrogen. Regulates intracellular CTP levels through interactions with the four ribonucleotide triphosphates. The polypeptide is CTP synthase (Prochlorococcus marinus (strain MIT 9515)).